The sequence spans 1440 residues: Bridge-like lipid transfer protein family member 3A (1440 aa).

A Chorein N-terminal domain is found at 3–95; that stretch reads GIIKKQILKH…KVEVEMKTCE (93 aa). Disordered regions lie at residues 267 to 307, 430 to 456, and 751 to 780; these read SAHQ…NSSS, ADSL…FQPP, and KPSA…TEHD. Residues 287–307 are compositionally biased toward low complexity; it reads SAQQSWAQAFGGSQGNSNSSS. Phosphoserine is present on residues S444, S446, S755, and S758. Positions 837–860 form a coiled coil; the sequence is ALLRLKEVLQRLQEQLTKDTESMT. A disordered region spans residues 891–1008; sequence VDADSAGSDS…ETAVNGQGEL (118 aa). The segment covering 911 to 920 has biased composition (basic and acidic residues); that stretch reads SEDRELKSDA. A compositionally biased stretch (low complexity) spans 985 to 995; that stretch reads ASSSPAALKPP. S988, S1103, and S1106 each carry phosphoserine. Residues 1106–1180 are disordered; it reads SFDGVSLDSS…SPAANSSVSP (75 aa). The span at 1134-1150 shows a compositional bias: low complexity; it reads LLESESGPESVPPGSLS. Residues 1151–1180 show a composition bias toward polar residues; that stretch reads NVSDNAGVQGSPLVNNYGQGSPAANSSVSP. The stretch at 1401-1435 forms a coiled coil; the sequence is KELPILQKELIETKQALANANQDKEKLLQEIRKYN.

As to quaternary structure, homodimer (Potential). Interacts with UHRF1.

The protein localises to the late endosome. In terms of biological role, tube-forming lipid transport protein which probably mediates the transfer of lipids between membranes at organelle contact sites. May be involved in the retrograde traffic of vesicle clusters in the endocytic pathway to the Golgi complex. This chain is Bridge-like lipid transfer protein family member 3A, found in Homo sapiens (Human).